The chain runs to 305 residues: Popeye domain-containing protein 3 (305 aa).

Asn-4 carries N-linked (GlcNAc...) asparagine glycosylation. 3 helical membrane passes run 34–54 (SILF…LYVF), 55–75 (SLLG…VCAA), and 77–99 (IFSW…TYQV). A disordered region spans residues 273–305 (PETPPVPPPRRLQRRSSGRPRPGVPNCSSPRKQ). A glycan (N-linked (GlcNAc...) asparagine) is linked at Asn-298.

The protein belongs to the popeye family. In terms of tissue distribution, expressed first preferentially in atrium and later also in the subepicardial compact layer of the ventricles.

It is found in the membrane. Functionally, may play a role in the maintenance of heart function mediated, at least in part, through cAMP-binding. May play a role in the regulation of KCNK2-mediated current amplitude. This is Popeye domain-containing protein 3 (POPDC3) from Gallus gallus (Chicken).